A 915-amino-acid polypeptide reads, in one-letter code: Protein translocase subunit SecA (915 aa).

Residues Q87, 105 to 109 (GEGKT), and D512 each bind ATP. Residues 849–864 (AAQQQARQAPLPNAPA) are compositionally biased toward low complexity. Residues 849–915 (AAQQQARQAP…CHGSRAKDHA (67 aa)) are disordered. Residues 876–891 (PEEKVARVAAERHIGR) show a composition bias toward basic and acidic residues. Residues C895, C897, C906, and H907 each contribute to the Zn(2+) site.

This sequence belongs to the SecA family. As to quaternary structure, monomer and homodimer. Part of the essential Sec protein translocation apparatus which comprises SecA, SecYEG and auxiliary proteins SecDF-YajC and YidC. Requires Zn(2+) as cofactor.

It is found in the cell inner membrane. Its subcellular location is the cytoplasm. The catalysed reaction is ATP + H2O + cellular proteinSide 1 = ADP + phosphate + cellular proteinSide 2.. Part of the Sec protein translocase complex. Interacts with the SecYEG preprotein conducting channel. Has a central role in coupling the hydrolysis of ATP to the transfer of proteins into and across the cell membrane, serving both as a receptor for the preprotein-SecB complex and as an ATP-driven molecular motor driving the stepwise translocation of polypeptide chains across the membrane. This chain is Protein translocase subunit SecA, found in Actinobacillus succinogenes (strain ATCC 55618 / DSM 22257 / CCUG 43843 / 130Z).